The sequence spans 277 residues: Large ribosomal subunit protein uL2 (277 aa).

Disordered regions lie at residues Lys32 to Gly58 and Val225 to Asn277.

This sequence belongs to the universal ribosomal protein uL2 family. Part of the 50S ribosomal subunit. Forms a bridge to the 30S subunit in the 70S ribosome.

Its function is as follows. One of the primary rRNA binding proteins. Required for association of the 30S and 50S subunits to form the 70S ribosome, for tRNA binding and peptide bond formation. It has been suggested to have peptidyltransferase activity; this is somewhat controversial. Makes several contacts with the 16S rRNA in the 70S ribosome. This chain is Large ribosomal subunit protein uL2, found in Borrelia duttonii (strain Ly).